The primary structure comprises 181 residues: Acetylcholinesterase (181 aa).

Residue serine 76 is the Acyl-ester intermediate of the active site. The active-site Charge relay system is glutamate 132. Positions 162 to 181 are disordered; it reads WQDQDNGGLPLTGNPTXPHN.

The protein belongs to the type-B carboxylesterase/lipase family. The N-terminus is blocked. Expressed by the venom gland. Is also probably expressed by liver and muscle.

The protein resides in the synapse. The protein localises to the secreted. It is found in the cell membrane. The catalysed reaction is acetylcholine + H2O = choline + acetate + H(+). In venom, its toxic role is unclear: it could result in less musculatory control by rapidly hydrolyzing acetylcholine, or that it works synergistically with alkaline phosphatase (ALP) in paralyzing prey through hypotension. In muscle, it terminates signal transduction at the neuromuscular junction by rapid hydrolysis of the acetylcholine released into the synaptic cleft. In liver, its function is unclear: it could serve as a safeguard against any diffusion of acetylcholine from synapses into the circulation. The protein is Acetylcholinesterase (ACHE) of Naja oxiana (Central Asian cobra).